The following is a 344-amino-acid chain: Putative replication factor C small subunit L499 (344 aa).

57-64 contacts ATP; that stretch reads GPSGSGKT.

It belongs to the activator 1 small subunits family. RfcS subfamily.

Functionally, part of the RFC clamp loader complex which loads the PCNA sliding clamp onto DNA. The polypeptide is Putative replication factor C small subunit L499 (Acanthamoeba polyphaga mimivirus (APMV)).